The primary structure comprises 353 residues: Dihydroorotate dehydrogenase (quinone) (353 aa).

FMN contacts are provided by residues 67–71 and Thr-91; that span reads AGFDK. Lys-71 contributes to the substrate binding site. Substrate is bound at residue 116 to 120; it reads NRMGF. The FMN site is built by Asn-144 and Asn-177. Asn-177 provides a ligand contact to substrate. Residue Ser-180 is the Nucleophile of the active site. Residue Asn-182 coordinates substrate. Residues Lys-213 and Thr-241 each contribute to the FMN site. Residue 242-243 participates in substrate binding; the sequence is NT. FMN contacts are provided by residues Gly-265, Gly-294, and 315-316; that span reads YT.

It belongs to the dihydroorotate dehydrogenase family. Type 2 subfamily. Monomer. Requires FMN as cofactor.

Its subcellular location is the cell membrane. It catalyses the reaction (S)-dihydroorotate + a quinone = orotate + a quinol. It participates in pyrimidine metabolism; UMP biosynthesis via de novo pathway; orotate from (S)-dihydroorotate (quinone route): step 1/1. Catalyzes the conversion of dihydroorotate to orotate with quinone as electron acceptor. In Mycobacteroides abscessus (strain ATCC 19977 / DSM 44196 / CCUG 20993 / CIP 104536 / JCM 13569 / NCTC 13031 / TMC 1543 / L948) (Mycobacterium abscessus), this protein is Dihydroorotate dehydrogenase (quinone).